The chain runs to 284 residues: Protein-S-isoprenylcysteine O-methyltransferase (284 aa).

The Cytoplasmic segment spans residues 1–16; sequence MAGCAARVPPGSEARL. Residues 17–33 form a helical membrane-spanning segment; sequence SLATFLLGASVLALPLL. Residues 34 to 41 lie on the Lumenal side of the membrane; that stretch reads TRAGLQGR. Residues 42–59 traverse the membrane as a helical segment; it reads TGLALYVAGLNALLLLLY. Over 60-69 the chain is Cytoplasmic; the sequence is RPPRYQIAIR. A helical transmembrane segment spans residues 70-87; the sequence is ACFLGFVFGCGVLLSFSQ. The Lumenal portion of the chain corresponds to 88 to 92; sequence SSWNH. Residues 93–112 traverse the membrane as a helical segment; the sequence is FGWYVCSLSLFHYSEYLVTA. Over 113–131 the chain is Cytoplasmic; that stretch reads VNNPKSLSLDSFLLNHSLE. Residues 132-149 traverse the membrane as a helical segment; the sequence is YTVAALSSWIEFTLENIF. Residues 150 to 154 lie on the Lumenal side of the membrane; the sequence is WPELK. The chain crosses the membrane as a helical span at residues 155 to 174; sequence QITWLSAAGLLMVIFGECLR. Residues 175-212 are Cytoplasmic-facing; sequence KVAMFTAGSNFNHVVQSEKSDTHTLVTSGVYAWCRHPS. Residues Gln190, 197 to 200, Tyr205, and 210 to 213 each bind S-adenosyl-L-methionine; these read HTLV and HPSY. The helical transmembrane segment at 213 to 228 threads the bilayer; it reads YVGWFYWSIGTQVMLC. A topological domain (lumenal) is located at residue Asn229. The helical transmembrane segment at 230–244 threads the bilayer; sequence PICGVVYALTVWRFF. Over 245–284 the chain is Cytoplasmic; sequence RDRTEEEEISLIHFFGEEYLDYKKRVPTGLPFIKGVKVGL. Position 247 (Arg247) interacts with substrate. Glu251 provides a ligand contact to S-adenosyl-L-methionine.

Belongs to the class VI-like SAM-binding methyltransferase superfamily. Isoprenylcysteine carboxyl methyltransferase family.

The protein resides in the endoplasmic reticulum membrane. It catalyses the reaction [protein]-C-terminal S-[(2E,6E)-farnesyl]-L-cysteine + S-adenosyl-L-methionine = [protein]-C-terminal S-[(2E,6E)-farnesyl]-L-cysteine methyl ester + S-adenosyl-L-homocysteine. Catalyzes the post-translational methylation of isoprenylated C-terminal cysteine residues. This Rattus norvegicus (Rat) protein is Protein-S-isoprenylcysteine O-methyltransferase.